The sequence spans 166 residues: Putative 4-hydroxy-4-methyl-2-oxoglutarate aldolase 1 (166 aa).

The residue at position 2 (Ala-2) is an N-acetylalanine. Residues 81–84 (GGNP) and Arg-103 each bind substrate. A divalent metal cation is bound at residue Asp-104.

This sequence belongs to the class II aldolase/RraA-like family. Homotrimer. It depends on a divalent metal cation as a cofactor.

The enzyme catalyses 4-hydroxy-4-methyl-2-oxoglutarate = 2 pyruvate. The catalysed reaction is oxaloacetate + H(+) = pyruvate + CO2. In terms of biological role, catalyzes the aldol cleavage of 4-hydroxy-4-methyl-2-oxoglutarate (HMG) into 2 molecules of pyruvate. Also contains a secondary oxaloacetate (OAA) decarboxylase activity due to the common pyruvate enolate transition state formed following C-C bond cleavage in the retro-aldol and decarboxylation reactions. This Arabidopsis thaliana (Mouse-ear cress) protein is Putative 4-hydroxy-4-methyl-2-oxoglutarate aldolase 1.